A 239-amino-acid polypeptide reads, in one-letter code: 4-hydroxy-tetrahydrodipicolinate reductase (239 aa).

NAD(+)-binding positions include 12–17, 94–96, and 118–121; these read GASGRM, GTT, and ASNF. His-150 serves as the catalytic Proton donor/acceptor. Residue His-151 coordinates (S)-2,3,4,5-tetrahydrodipicolinate. Lys-154 serves as the catalytic Proton donor. A (S)-2,3,4,5-tetrahydrodipicolinate-binding site is contributed by 160-161; the sequence is GT.

This sequence belongs to the DapB family.

The protein resides in the cytoplasm. It carries out the reaction (S)-2,3,4,5-tetrahydrodipicolinate + NAD(+) + H2O = (2S,4S)-4-hydroxy-2,3,4,5-tetrahydrodipicolinate + NADH + H(+). It catalyses the reaction (S)-2,3,4,5-tetrahydrodipicolinate + NADP(+) + H2O = (2S,4S)-4-hydroxy-2,3,4,5-tetrahydrodipicolinate + NADPH + H(+). The protein operates within amino-acid biosynthesis; L-lysine biosynthesis via DAP pathway; (S)-tetrahydrodipicolinate from L-aspartate: step 4/4. Catalyzes the conversion of 4-hydroxy-tetrahydrodipicolinate (HTPA) to tetrahydrodipicolinate. This Stenotrophomonas maltophilia (strain R551-3) protein is 4-hydroxy-tetrahydrodipicolinate reductase.